A 685-amino-acid polypeptide reads, in one-letter code: E3 ubiquitin-protein ligase RNF103 (685 aa).

The next 4 helical transmembrane spans lie at 6–26 (FFLL…EAIV), 326–346 (LFVL…FITQ), 366–386 (LLII…LDSF), and 411–431 (MFYS…GLLI). Residues 526–543 (EEMSEGSQDTENDSESEN) show a composition bias toward acidic residues. The tract at residues 526 to 550 (EEMSEGSQDTENDSESENTDTLSSE) is disordered. The segment at 621–663 (CVVCLENFENGCLLMGLPCGHVFHQNCIVMWLAGGRHCCPVCR) adopts an RING-type zinc-finger fold.

Interacts with DERL1 and VCP. As to expression, highly expressed in the normal cerebellum but not in the cerebral cortex.

The protein resides in the endoplasmic reticulum membrane. It carries out the reaction S-ubiquitinyl-[E2 ubiquitin-conjugating enzyme]-L-cysteine + [acceptor protein]-L-lysine = [E2 ubiquitin-conjugating enzyme]-L-cysteine + N(6)-ubiquitinyl-[acceptor protein]-L-lysine.. It participates in protein modification; protein ubiquitination. In terms of biological role, acts as an E2-dependent E3 ubiquitin-protein ligase, probably involved in the ER-associated protein degradation pathway. This is E3 ubiquitin-protein ligase RNF103 (RNF103) from Homo sapiens (Human).